Reading from the N-terminus, the 395-residue chain is Multidrug resistance protein MdtL (395 aa).

The next 12 membrane-spanning stretches (helical) occupy residues 4 to 24 (FLLC…MYLV), 42 to 62 (IAFS…GKIA), 69 to 89 (PVAI…SRAS), 93 to 113 (LFLS…VVAF), 131 to 151 (LLNG…HLIM), 158 to 178 (SLFY…LFIL), 217 to 237 (VSVI…VMGF), 247 to 267 (ALTA…LGLF), 271 to 291 (TLML…SLAH), 295 to 315 (VTLF…GVAM), 328 to 350 (VASS…LAAI), and 355 to 377 (AMNM…IFSV).

It belongs to the major facilitator superfamily. DHA1 family. MdtL (TC 2.A.1.2.22) subfamily.

It is found in the cell inner membrane. This is Multidrug resistance protein MdtL from Salmonella dublin (strain CT_02021853).